The primary structure comprises 202 residues: Peroxynitrite isomerase (202 aa).

The short motif at 21 to 27 (GEWEGRG) is the GXWXGXG element. His193 provides a ligand contact to heme b.

This sequence belongs to the nitrobindin family. Homodimer. It depends on heme b as a cofactor.

It carries out the reaction peroxynitrite = nitrate. It functions in the pathway nitrogen metabolism. Heme-binding protein able to scavenge peroxynitrite and to protect free L-tyrosine against peroxynitrite-mediated nitration, by acting as a peroxynitrite isomerase that converts peroxynitrite to nitrate. Therefore, this protein likely plays a role in peroxynitrite sensing and in the detoxification of reactive nitrogen and oxygen species (RNS and ROS, respectively). Is able to bind nitric oxide (NO) in vitro, but may act as a sensor of peroxynitrite levels in vivo. The chain is Peroxynitrite isomerase from Pseudarthrobacter chlorophenolicus (strain ATCC 700700 / DSM 12829 / CIP 107037 / JCM 12360 / KCTC 9906 / NCIMB 13794 / A6) (Arthrobacter chlorophenolicus).